A 1066-amino-acid chain; its full sequence is MPGDEERGFLAAREELASALRWDSAQVFPLEQLMPLLATSLPPAARYLQLDAGRLVRCNAHGEPRNYLNTLSTALNILEKYGRNLLSPQRPRYWRSVKFNNPVFRSTVDAVQGGRDVLRLYGYTEERPDGLSFPEGQEEPDEYQVAVVTLEVLLLRTELSLLLQNTHPRQNALDQLLRESVEDGMLQLSEFHPLLREIVPGPRPSAQGSTPGPCFLCGSAPGTLHCPACNQVSCPACDILFHGHPSRAHHLRQALPGSHQTASLSSSLPASSQPRPPSSSLALGDSSLSSPDPANACLPWHCLTCATLNEPWAVFCAVCSQPKGCKVPGIEGSHGTGGLEPEPARDQWACQSCTFENEAAAVLCAICERPRLAQPPSLVVDSHDAGVCQQSLKQEDPLLTAAQPQVWYCDHCTFCNSGPVWVCAMCNRTRDPIPTQPALQSYPSSLEKGRPKPGSSQHLGSSLPASCGDPEKQRQDKMRKEGLQLVSMIQEGETAGASPEEVFSALQYSGTEVPLQWLRSELSYVLEMVAELAGQQDPELGAFSCQEARKAWLDRHGNLDEAVEECVRARRRKVHELQSLGFGPKEGSLQALFQHGGDVARALTELQRQRLEPFHQRLWDRDPEPTPCWDGLDRQSLVRRLLAVYTLPSWGRAELALALLQETPRNYELLDVVEAVRHSQDRAFLRRLLAQECAVCGWALPRNRMQALISCECTICPECFRQHFTIALKEKHITDMVCPACGRPDLTDDAQLLSYFSTLDIQLRESLDPDAYALFHKKLTEAVLMRDPKFLWCAQCSFGFIYEREQLEATCPQCHQTFCVRCKRQWEEQHRGRSCEDFQNWKRTNDPEYQAQGLAMYLQENGIDCPKCKFSYALARGGCMHFHCTQCRHQFCSGCYNAFYAKNKCPDPNCKVKKSLHGHHPRDCLFYLRDWTAARLQKLLQDNNVMFNTEPPAGTRAVPGGGCRVMEQKEVHSGFRDEACGKETPPGYAGLCQAHYKEYLVSLINAHSLDPATLYEVEELETATIRYLHLAPQPADGEDLPAYQARLLQKLREEVPLGQSIARRRK.

The polyubiquitin-binding stretch occupies residues 1–479 (MPGDEERGFL…PEKQRQDKMR (479 aa)). Residues 70-141 (TLSTALNILE…SFPEGQEEPD (72 aa)) form the PUB domain. The segment at 251 to 287 (LRQALPGSHQTASLSSSLPASSQPRPPSSSLALGDSS) is disordered. Over residues 262–287 (ASLSSSLPASSQPRPPSSSLALGDSS) the composition is skewed to low complexity. 2 RanBP2-type zinc fingers span residues 293-325 (PANA…PKGC) and 344-373 (ARDQ…PRLA). Ser-377 is subject to Phosphoserine. Residues 403 to 432 (QPQVWYCDHCTFCNSGPVWVCAMCNRTRDP) form a RanBP2-type 3 zinc finger. The segment at 434–478 (PTQPALQSYPSSLEKGRPKPGSSQHLGSSLPASCGDPEKQRQDKM) is disordered. Positions 454–464 (GSSQHLGSSLP) are enriched in polar residues. Residues 469–478 (DPEKQRQDKM) are compositionally biased toward basic and acidic residues. An interaction with RBCK1 region spans residues 557 to 610 (GNLDEAVEECVRARRRKVHELQSLGFGPKEGSLQALFQHGGDVARALTELQRQR). A UBA domain is found at 558–609 (NLDEAVEECVRARRRKVHELQSLGFGPKEGSLQALFQHGGDVARALTELQRQ). Positions 689 to 923 (LAQECAVCGW…KSLHGHHPRD (235 aa)) are TRIAD supradomain. Residues Cys-693, Cys-696, Cys-711, Cys-713, Cys-716, Cys-719, Cys-738, Cys-741, Cys-793, Cys-796, Cys-811, Cys-814, Cys-819, Cys-822, His-830, Cys-835, Cys-865, and Cys-868 each contribute to the Zn(2+) site. The RING-type 1 zinc finger occupies 693–743 (CAVCGWALPRNRMQALISCECTICPECFRQHFTIALKEKHITDMVCPACGR). The IBR-type zinc finger occupies 773–835 (ALFHKKLTEA…WEEQHRGRSC (63 aa)). Residues 865–895 (CPKCKFSYALARGGCMHFHCTQCRHQFCSGC) form an RING-type 2; atypical zinc finger. Cys-879 is a catalytic residue. Residues Cys-884, Cys-887, Cys-892, Cys-895, Cys-910, and His-919 each coordinate Zn(2+). The tract at residues 904 to 1066 (KCPDPNCKVK…LGQSIARRRK (163 aa)) is LDD domain.

Belongs to the RBR family. In terms of assembly, component of the LUBAC complex (linear ubiquitin chain assembly complex) which consists of SHARPIN, RBCK1 and RNF31. LUBAC has a MW of approximately 600 kDa suggesting a heteromultimeric assembly of its subunits. Associates with the TNF-R1 signaling complex (TNF-RSC) in a stimulation-dependent manner. Interacts (via the PUB domain) with OTULIN (via the PIM motif); the interaction is direct. Interacts (via the PUB domain) with VCP (via the PIM motif). Interacts (via the PUB domain) with SPATA2 (via the PIM motif); interaction is direct and bridges RNF31 and CYLD. Interacts with CYLD; the interaction is indirect and is mediated via SPATA2. Interacts with MUSK. Interacts with CARD11, promoting linear ubiquitination of BCL10. Post-translationally, autoubiquitinated. Interaction with OTULIN is required to suppress formation of 'Met-1'-linked polyubiquitin chains and prevent subsequent inactivation of the LUBAC complex. Cleaved by caspase during apoptosis. As to expression, widely expressed (at protein level). Not expressed in heart.

Its subcellular location is the cytoplasm. It carries out the reaction [E2 ubiquitin-conjugating enzyme]-S-ubiquitinyl-L-cysteine + [acceptor protein]-L-lysine = [E2 ubiquitin-conjugating enzyme]-L-cysteine + [acceptor protein]-N(6)-ubiquitinyl-L-lysine.. It participates in protein modification; protein ubiquitination. Its function is as follows. E3 ubiquitin-protein ligase component of the LUBAC complex which conjugates linear ('Met-1'-linked) polyubiquitin chains to substrates and plays a key role in NF-kappa-B activation and regulation of inflammation. LUBAC conjugates linear polyubiquitin to IKBKG and RIPK1 and is involved in activation of the canonical NF-kappa-B and the JNK signaling pathways. Linear ubiquitination mediated by the LUBAC complex interferes with TNF-induced cell death and thereby prevents inflammation. LUBAC is recruited to the TNF-R1 signaling complex (TNF-RSC) following polyubiquitination of TNF-RSC components by BIRC2 and/or BIRC3 and to conjugate linear polyubiquitin to IKBKG and possibly other components contributing to the stability of the complex. The LUBAC complex is also involved in innate immunity by conjugating linear polyubiquitin chains at the surface of bacteria invading the cytosol to form the ubiquitin coat surrounding bacteria. LUBAC is not able to initiate formation of the bacterial ubiquitin coat, and can only promote formation of linear polyubiquitins on pre-existing ubiquitin. Recruited to the surface of bacteria by RNF213, which initiates the bacterial ubiquitin coat. The bacterial ubiquitin coat acts as an 'eat-me' signal for xenophagy and promotes NF-kappa-B activation. Together with OTULIN, the LUBAC complex regulates the canonical Wnt signaling during angiogenesis. RNF31 is required for linear ubiquitination of BCL10, thereby promoting TCR-induced NF-kappa-B activation. Binds polyubiquitin of different linkage types. In Mus musculus (Mouse), this protein is E3 ubiquitin-protein ligase RNF31.